A 461-amino-acid chain; its full sequence is Deoxyguanosinetriphosphate triphosphohydrolase-like protein (461 aa).

A disordered region spans residues E22–D41. Basic and acidic residues predominate over residues F24–D41. One can recognise an HD domain in the interval R72 to G285.

Belongs to the dGTPase family. Type 2 subfamily.

The chain is Deoxyguanosinetriphosphate triphosphohydrolase-like protein from Haemophilus influenzae (strain PittEE).